The sequence spans 285 residues: Nucleotide-binding protein PFL_0912 (285 aa).

8–15 contacts ATP; it reads GRSGSGKS. 60–63 is a binding site for GTP; it reads DARN.

This sequence belongs to the RapZ-like family.

In terms of biological role, displays ATPase and GTPase activities. The chain is Nucleotide-binding protein PFL_0912 from Pseudomonas fluorescens (strain ATCC BAA-477 / NRRL B-23932 / Pf-5).